Consider the following 527-residue polypeptide: Serine/threonine-protein kinase NLK (527 aa).

Sufficient for interaction with DAPK3 stretches follow at residues 1 to 125 (MSLC…KAHH) and 124 to 416 (HHHQ…SKRI). Required for interaction with TAB2 stretches follow at residues 1–304 (MSLC…VVTQ) and 434–527 (YHTC…LVWE). Disordered regions lie at residues 22–72 (AAAA…SSAA) and 90–140 (QQPY…DIEP). Positions 26 to 54 (GHHHHHHHHLPHLPPPHLHHHHHPQHHLH) are enriched in basic residues. The span at 103-119 (PGPAAAAPAQVQAAAAA) shows a compositional bias: low complexity. Basic residues predominate over residues 122 to 131 (KAHHHQHSHH). The Protein kinase domain maps to 138–427 (IEPDRPIGYG…AKDALAHPYL (290 aa)). ATP-binding positions include 144 to 152 (IGYGAFGVV) and K167. Catalysis depends on D264, which acts as the Proton acceptor. Residue T298 is modified to Phosphothreonine; by autocatalysis. The short motif at 298–300 (TQE) is the TQE element. The interval 428–527 (DEGRLRYHTC…EMPPSPLVWE (100 aa)) is required for homodimerization and kinase activation and localization to the nucleus. S522 carries the post-translational modification Phosphoserine.

It belongs to the protein kinase superfamily. CMGC Ser/Thr protein kinase family. MAP kinase subfamily. As to quaternary structure, homodimer. Homodimerization is required for intermolecular autophosphorylation, kinase activation and nuclear localization. May interact with components of cullin-RING-based SCF (SKP1-CUL1-F-box protein) E3 ubiquitin-protein ligase complexes. Interacts with LEF1, MEF2A, MYBL1 and MYBL2. Interacts with the upstream activating kinases HIPK2 and MAP3K7/TAK1. Interaction with MAP3K7/TAK1 seems to be indirect, and may be mediated by other proteins such as STAT3, TAB1 and TAB2. Interacts with and phosphorylates a number of transcription factors including FOXO1, FOXO3, FOXO4, MYB, NOTCH1 and TCF7L2/TCF4. Interacts with DAPK3/ZIPK, and this interaction may disrupt interaction with transcription factors such as TCF7L2/TCF4. Interacts with RNF138/NARF. Interacts with ATF5; the interaction stabilizes ATF5 at the protein level in a kinase-independent manner. Mg(2+) serves as cofactor. In terms of processing, phosphorylated on Thr-298. Intermolecular autophosphorylation on Thr-298 activates the enzyme.

It localises to the nucleus. The protein resides in the cytoplasm. The catalysed reaction is L-seryl-[protein] + ATP = O-phospho-L-seryl-[protein] + ADP + H(+). It carries out the reaction L-threonyl-[protein] + ATP = O-phospho-L-threonyl-[protein] + ADP + H(+). Its activity is regulated as follows. Activated by dimerization and subsequent intermolecular autophosphorylation on Thr-298. Activated by the non-canonical Wnt signaling pathway, in which WNT5A treatment leads to activation of MAP3K7/TAK1 and HIPK2, which subsequently phosphorylates and activates this protein. Other cytokines such as IL6 may also activate this regulatory circuit. Its function is as follows. Serine/threonine-protein kinase that regulates a number of transcription factors with key roles in cell fate determination. Positive effector of the non-canonical Wnt signaling pathway, acting downstream of WNT5A, MAP3K7/TAK1 and HIPK2. Negative regulator of the canonical Wnt/beta-catenin signaling pathway. Binds to and phosphorylates TCF7L2/TCF4 and LEF1, promoting the dissociation of the TCF7L2/LEF1/beta-catenin complex from DNA, as well as the ubiquitination and subsequent proteolysis of LEF1. Together these effects inhibit the transcriptional activation of canonical Wnt/beta-catenin target genes. Negative regulator of the Notch signaling pathway. Binds to and phosphorylates NOTCH1, thereby preventing the formation of a transcriptionally active ternary complex of NOTCH1, RBPJ/RBPSUH and MAML1. Negative regulator of the MYB family of transcription factors. Phosphorylation of MYB leads to its subsequent proteolysis while phosphorylation of MYBL1 and MYBL2 inhibits their interaction with the coactivator CREBBP. Other transcription factors may also be inhibited by direct phosphorylation of CREBBP itself. Acts downstream of IL6 and MAP3K7/TAK1 to phosphorylate STAT3, which is in turn required for activation of NLK by MAP3K7/TAK1. Upon IL1B stimulus, cooperates with ATF5 to activate the transactivation activity of C/EBP subfamily members. Phosphorylates ATF5 but also stabilizes ATF5 protein levels in a kinase-independent manner. Acts as an inhibitor of the mTORC1 complex in response to osmotic stress by mediating phosphorylation of RPTOR, thereby preventing recruitment of the mTORC1 complex to lysosomes. The protein is Serine/threonine-protein kinase NLK (NLK) of Homo sapiens (Human).